Consider the following 297-residue polypeptide: Cell division protein ZipA (297 aa).

A topological domain (periplasmic) is located at residue Met1. The chain crosses the membrane as a helical span at residues 2-22; sequence EIGLREWLILIGIIVIAGILF. The Cytoplasmic segment spans residues 23-297; that stretch reads DGWRRMRGGK…FERRALTQKR (275 aa). Residues 48-151 are disordered; the sequence is DEEGGSAEVL…AAPASNSVKE (104 aa). A compositionally biased stretch (basic and acidic residues) spans 83 to 92; that stretch reads ARDREREPKP. The span at 124 to 133 shows a compositional bias: acidic residues; sequence LFSDSDDDFA.

The protein belongs to the ZipA family. As to quaternary structure, interacts with FtsZ via their C-terminal domains.

It localises to the cell inner membrane. In terms of biological role, essential cell division protein that stabilizes the FtsZ protofilaments by cross-linking them and that serves as a cytoplasmic membrane anchor for the Z ring. Also required for the recruitment to the septal ring of downstream cell division proteins. The polypeptide is Cell division protein ZipA (Pseudomonas putida (strain ATCC 47054 / DSM 6125 / CFBP 8728 / NCIMB 11950 / KT2440)).